Reading from the N-terminus, the 236-residue chain is MAQTNGRTNRRDIYLKLRQMVLTLELAPGAALSENELAASMGVSRTPVRESLILLAQEGLVQVFPKIGSFVSRVDPARVADAQFLREAVELGSLDALPAELDPAVVGELRDNLVRQGRKDLDLEEFFGLDEAFHQGLMRLSGHGNVWTTVAAAKGHLDRARRLGLHENVSPAVFVAQHREIFDAVTEGDVPLARTAMRTHLRAVFDDIERIRAHSPELFATDAATVPVRRNIVVWE.

The HTH gntR-type domain occupies 7–74 (RTNRRDIYLK…PKIGSFVSRV (68 aa)). Residues 34–53 (ENELAASMGVSRTPVRESLI) constitute a DNA-binding region (H-T-H motif).

This is an uncharacterized protein from Streptomyces ambofaciens.